Here is a 323-residue protein sequence, read N- to C-terminus: Mitochondrial glutamate carrier 1 (323 aa).

Solcar repeat units lie at residues 6–93, 101–214, and 223–312; these read ISLP…FRHQ, LTLP…LNQL, and SPFY…GIAE. The next 6 membrane-spanning stretches (helical) occupy residues 12–32, 62–82, 107–127, 189–209, 223–243, and 292–312; these read LING…IDLA, YFGM…EKAI, MLAG…MEML, GLGA…PLFA, SPFY…AVAV, and ALVI…GIAE.

This sequence belongs to the mitochondrial carrier (TC 2.A.29) family. As to expression, detected in insulin-secreting beta-cells and pancreatic islets (at the protein level).

It is found in the mitochondrion inner membrane. It catalyses the reaction L-glutamate(in) + H(+)(in) = L-glutamate(out) + H(+)(out). Its function is as follows. Mitochondrial glutamate/H(+) symporter. Responsible for the transport of glutamate from the cytosol into the mitochondrial matrix with the concomitant import of a proton. Plays a role in the control of glucose-stimulated insulin secretion. The protein is Mitochondrial glutamate carrier 1 of Rattus norvegicus (Rat).